The primary structure comprises 336 residues: MSRVTLSRYLIEQTRSNNTPADLRFLIEVVARACKEISHAVSKGALGGVLGSMGTENVQGEVQKKLDVISNEILLEANEWGGHLAGMASEEMDNAYQIPGKYPKGAYLLVFDPLDGSSNIDINAPVGTIFSVLRCPNEYLSQNEALNEKAFLQPGTQQVAAGYAIYGPQTMLVLTLGDGVKGFTLDREMGSFVLTHEDIKIPESTQEFAINMSNERHWEAPVKRYVEELLAGDTGPLKKNYNMRWVAAMVADVHRILTRGGLFMYPRDSREPEKPGKLRLMYEANPMSFLVEQAGGASTDGHKRILDIQPEGLHQRVAVFLGSKEEVARVTGYHKE.

Mg(2+)-binding residues include Glu90, Asp112, Leu114, and Asp115. Substrate contacts are provided by residues 115–118 (DGSS), Asn211, and Lys277. A Mg(2+)-binding site is contributed by Glu283.

The protein belongs to the FBPase class 1 family. Homotetramer. Mg(2+) serves as cofactor.

The protein resides in the cytoplasm. The enzyme catalyses beta-D-fructose 1,6-bisphosphate + H2O = beta-D-fructose 6-phosphate + phosphate. The protein operates within carbohydrate biosynthesis; gluconeogenesis. In Pseudomonas fluorescens (strain ATCC BAA-477 / NRRL B-23932 / Pf-5), this protein is Fructose-1,6-bisphosphatase class 1.